The following is a 261-amino-acid chain: Cytochrome c oxidase subunit 3 (261 aa).

Residues 1–15 (MTHQTHAYHMVNPSP) are Mitochondrial matrix-facing. The helical transmembrane segment at 16–34 (WPLTGALSALLMTSGLIMW) threads the bilayer. The Mitochondrial intermembrane portion of the chain corresponds to 35–40 (FHFNST). The helical transmembrane segment at 41–66 (TLLMLGLTTNMLTMYQWWRDIIREST) threads the bilayer. Residues 67-72 (FQGHHT) are Mitochondrial matrix-facing. A helical transmembrane segment spans residues 73–105 (PSVQKGLRYGMILFIISEVLFFTGFFWAFYHSS). Over 106 to 128 (LAPTPELGGCWPPTGIHPLNPLE) the chain is Mitochondrial intermembrane. The helical transmembrane segment at 129–152 (VPLLNTSVLLASGVSITWAHHSLM) threads the bilayer. Over 153 to 155 (EGN) the chain is Mitochondrial matrix. A helical membrane pass occupies residues 156 to 183 (RNHMLQALFITIALGVYFTLLQASEYYE). At 184-190 (APFTISD) the chain is on the mitochondrial intermembrane side. The chain crosses the membrane as a helical span at residues 191–223 (GVYGSTFFVATGFHGLHVIIGSTFLIVCFFRQL). Over 224–232 (KFHFTSNHH) the chain is Mitochondrial matrix. The helical transmembrane segment at 233 to 256 (FGFEAAAWYWHFVDVVWLFLYVSI) threads the bilayer. The Mitochondrial intermembrane segment spans residues 257 to 261 (YWWGS).

Belongs to the cytochrome c oxidase subunit 3 family. Component of the cytochrome c oxidase (complex IV, CIV), a multisubunit enzyme composed of 14 subunits. The complex is composed of a catalytic core of 3 subunits MT-CO1, MT-CO2 and MT-CO3, encoded in the mitochondrial DNA, and 11 supernumerary subunits COX4I, COX5A, COX5B, COX6A, COX6B, COX6C, COX7A, COX7B, COX7C, COX8 and NDUFA4, which are encoded in the nuclear genome. The complex exists as a monomer or a dimer and forms supercomplexes (SCs) in the inner mitochondrial membrane with NADH-ubiquinone oxidoreductase (complex I, CI) and ubiquinol-cytochrome c oxidoreductase (cytochrome b-c1 complex, complex III, CIII), resulting in different assemblies (supercomplex SCI(1)III(2)IV(1) and megacomplex MCI(2)III(2)IV(2)).

It is found in the mitochondrion inner membrane. The enzyme catalyses 4 Fe(II)-[cytochrome c] + O2 + 8 H(+)(in) = 4 Fe(III)-[cytochrome c] + 2 H2O + 4 H(+)(out). Its function is as follows. Component of the cytochrome c oxidase, the last enzyme in the mitochondrial electron transport chain which drives oxidative phosphorylation. The respiratory chain contains 3 multisubunit complexes succinate dehydrogenase (complex II, CII), ubiquinol-cytochrome c oxidoreductase (cytochrome b-c1 complex, complex III, CIII) and cytochrome c oxidase (complex IV, CIV), that cooperate to transfer electrons derived from NADH and succinate to molecular oxygen, creating an electrochemical gradient over the inner membrane that drives transmembrane transport and the ATP synthase. Cytochrome c oxidase is the component of the respiratory chain that catalyzes the reduction of oxygen to water. Electrons originating from reduced cytochrome c in the intermembrane space (IMS) are transferred via the dinuclear copper A center (CU(A)) of subunit 2 and heme A of subunit 1 to the active site in subunit 1, a binuclear center (BNC) formed by heme A3 and copper B (CU(B)). The BNC reduces molecular oxygen to 2 water molecules using 4 electrons from cytochrome c in the IMS and 4 protons from the mitochondrial matrix. In Pelea capreolus (Gray rhebok), this protein is Cytochrome c oxidase subunit 3 (MT-CO3).